Here is a 289-residue protein sequence, read N- to C-terminus: uncharacterized protein (289 aa).

One can recognise an HTH tetR-type domain in the interval 2–62 (NEKKERIIKT…SACEYYIGMS (61 aa)). The segment at residues 25–44 (TIQEIASECGISKGAFYLHF) is a DNA-binding region (H-T-H motif).

This is an uncharacterized protein from Bacillus subtilis (strain 168).